Here is a 253-residue protein sequence, read N- to C-terminus: Sulfate transporter CysZ (253 aa).

The next 4 helical transmembrane spans lie at 31–51, 75–95, 151–171, and 222–242; these read FVIL…WWLF, LLWP…FSTI, IVLL…PVLW, and IPVL…AMWV.

This sequence belongs to the CysZ family.

It is found in the cell inner membrane. Its function is as follows. High affinity, high specificity proton-dependent sulfate transporter, which mediates sulfate uptake. Provides the sulfur source for the cysteine synthesis pathway. This Citrobacter koseri (strain ATCC BAA-895 / CDC 4225-83 / SGSC4696) protein is Sulfate transporter CysZ.